The following is a 273-amino-acid chain: Dermonecrotic toxin LhSicTox-alphaIA2av (273 aa).

Residue His5 is part of the active site. Residues Glu25 and Asp27 each coordinate Mg(2+). Catalysis depends on His41, which acts as the Nucleophile. 2 disulfide bridges follow: Cys45–Cys51 and Cys47–Cys190. Asp85 contacts Mg(2+).

This sequence belongs to the arthropod phospholipase D family. Class II subfamily. Mg(2+) serves as cofactor. Expressed by the venom gland.

It is found in the secreted. The catalysed reaction is an N-(acyl)-sphingosylphosphocholine = an N-(acyl)-sphingosyl-1,3-cyclic phosphate + choline. It catalyses the reaction an N-(acyl)-sphingosylphosphoethanolamine = an N-(acyl)-sphingosyl-1,3-cyclic phosphate + ethanolamine. It carries out the reaction a 1-acyl-sn-glycero-3-phosphocholine = a 1-acyl-sn-glycero-2,3-cyclic phosphate + choline. The enzyme catalyses a 1-acyl-sn-glycero-3-phosphoethanolamine = a 1-acyl-sn-glycero-2,3-cyclic phosphate + ethanolamine. In terms of biological role, dermonecrotic toxins cleave the phosphodiester linkage between the phosphate and headgroup of certain phospholipids (sphingolipid and lysolipid substrates), forming an alcohol (often choline) and a cyclic phosphate. This toxin acts on sphingomyelin (SM). It may also act on ceramide phosphoethanolamine (CPE), lysophosphatidylcholine (LPC) and lysophosphatidylethanolamine (LPE), but not on lysophosphatidylserine (LPS), and lysophosphatidylglycerol (LPG). It acts by transphosphatidylation, releasing exclusively cyclic phosphate products as second products. Induces dermonecrosis, hemolysis, increased vascular permeability, edema, inflammatory response, and platelet aggregation. This chain is Dermonecrotic toxin LhSicTox-alphaIA2av, found in Loxosceles hirsuta (Recluse spider).